The primary structure comprises 389 residues: 23S rRNA (uracil(747)-C(5))-methyltransferase RlmC (389 aa).

[4Fe-4S] cluster contacts are provided by Cys-12, Cys-20, Cys-23, and Cys-99. Residues Gln-224, Phe-253, Glu-274, and Asn-321 each coordinate S-adenosyl-L-methionine. Cys-348 serves as the catalytic Nucleophile.

The protein belongs to the class I-like SAM-binding methyltransferase superfamily. RNA M5U methyltransferase family. RlmC subfamily.

The catalysed reaction is uridine(747) in 23S rRNA + S-adenosyl-L-methionine = 5-methyluridine(747) in 23S rRNA + S-adenosyl-L-homocysteine + H(+). Catalyzes the formation of 5-methyl-uridine at position 747 (m5U747) in 23S rRNA. In Shewanella sp. (strain W3-18-1), this protein is 23S rRNA (uracil(747)-C(5))-methyltransferase RlmC.